A 131-amino-acid polypeptide reads, in one-letter code: Small ribosomal subunit protein uS11 (131 aa).

Positions 1–15 (MAAQKVKKTRRRKER) are enriched in basic residues. The interval 1–23 (MAAQKVKKTRRRKERKNVEHGAA) is disordered.

The protein belongs to the universal ribosomal protein uS11 family. Part of the 30S ribosomal subunit. Interacts with proteins S7 and S18. Binds to IF-3.

Its function is as follows. Located on the platform of the 30S subunit, it bridges several disparate RNA helices of the 16S rRNA. Forms part of the Shine-Dalgarno cleft in the 70S ribosome. The protein is Small ribosomal subunit protein uS11 of Clostridium perfringens (strain 13 / Type A).